The primary structure comprises 656 residues: Vi polysaccharide export protein VexE (656 aa).

Functionally, may be involved in translocation of the Vi antigen. The sequence is that of Vi polysaccharide export protein VexE (vexE) from Salmonella typhi.